Consider the following 680-residue polypeptide: Putative cyclin-dependent serine/threonine-protein kinase DDB_G0272797/DDB_G0274007 (680 aa).

Residues 4-381 (YIILSKCGQG…SLEALEHPWF (378 aa)) form the Protein kinase domain. ATP-binding positions include 10–18 (CGQGTYGSV) and lysine 33. Residue aspartate 125 is the Proton acceptor of the active site. Disordered stretches follow at residues 243-299 (QQQQ…LQSP), 409-444 (RQLQ…QRQH), 483-507 (LAQH…QHQQ), and 597-680 (QQQQ…KSNG). Residues 257 to 286 (NNNNNNNNNNNNNNNNNNNNNNNNNNNNNN) are compositionally biased toward low complexity. The span at 287-297 (KYNNISTSCLQ) shows a compositional bias: polar residues. Low complexity-rich tracts occupy residues 410 to 444 (QLQQ…QRQH), 483 to 494 (LAQHQQYNSQQH), and 597 to 616 (QQQQ…PPQH). Residues 617–631 (QHQHQHQHQHQHQHQ) are compositionally biased toward basic residues. Positions 632-642 (HQPQPQHQHQP) are enriched in low complexity. The segment covering 643-655 (QPQPQPTPTPTPT) has biased composition (pro residues). The segment covering 656–680 (STPTTTTIPPTITTTIQPTISKSNG) has biased composition (low complexity).

The protein belongs to the protein kinase superfamily. CMGC Ser/Thr protein kinase family. CDC2/CDKX subfamily.

It catalyses the reaction L-seryl-[protein] + ATP = O-phospho-L-seryl-[protein] + ADP + H(+). It carries out the reaction L-threonyl-[protein] + ATP = O-phospho-L-threonyl-[protein] + ADP + H(+). The polypeptide is Putative cyclin-dependent serine/threonine-protein kinase DDB_G0272797/DDB_G0274007 (Dictyostelium discoideum (Social amoeba)).